A 430-amino-acid polypeptide reads, in one-letter code: Adenylosuccinate synthetase (430 aa).

GTP-binding positions include 12–18 (GDEGKGK) and 40–42 (GHT). Aspartate 13 functions as the Proton acceptor in the catalytic mechanism. Residues aspartate 13 and glycine 40 each coordinate Mg(2+). Residues 13-16 (DEGK), 38-41 (NAGH), threonine 128, arginine 142, glutamine 223, threonine 238, and arginine 302 each bind IMP. The active-site Proton donor is histidine 41. 298-304 (TTTGRPR) serves as a coordination point for substrate. Residues arginine 304, 330 to 332 (SID), and 412 to 414 (SVG) contribute to the GTP site.

The protein belongs to the adenylosuccinate synthetase family. As to quaternary structure, homodimer. It depends on Mg(2+) as a cofactor.

It localises to the cytoplasm. The enzyme catalyses IMP + L-aspartate + GTP = N(6)-(1,2-dicarboxyethyl)-AMP + GDP + phosphate + 2 H(+). The protein operates within purine metabolism; AMP biosynthesis via de novo pathway; AMP from IMP: step 1/2. Functionally, plays an important role in the de novo pathway of purine nucleotide biosynthesis. Catalyzes the first committed step in the biosynthesis of AMP from IMP. The chain is Adenylosuccinate synthetase from Streptococcus pyogenes serotype M12 (strain MGAS9429).